The primary structure comprises 438 residues: 2-(3-amino-3-carboxypropyl)histidine synthase subunit 1 (438 aa).

The segment at 1 to 24 is disordered; that stretch reads MAALVVSETAEPGSRVGPGRGRIS. Positions 110, 214, and 342 each coordinate [4Fe-4S] cluster. Residues 402–438 are disordered; sequence LCQPASDKVQQGSRGGSPAPACESCNCADQKATSPAP. Ser-418 is subject to Phosphoserine.

It belongs to the DPH1/DPH2 family. DPH1 subfamily. Component of the 2-(3-amino-3-carboxypropyl)histidine synthase complex composed of DPH1, DPH2, DPH3 and a NADH-dependent reductase. Interacts with DPH2. Interacts with RBM8A. It depends on [4Fe-4S] cluster as a cofactor. Strongly expressed in kidney and liver. Moderately expressed in brain, skin and testis. Weakly expressed in heart, lung, small intestine, spleen, stomach and thymus.

Its subcellular location is the nucleus. The protein localises to the cytoplasm. The enzyme catalyses L-histidyl-[translation elongation factor 2] + S-adenosyl-L-methionine = 2-[(3S)-amino-3-carboxypropyl]-L-histidyl-[translation elongation factor 2] + S-methyl-5'-thioadenosine + H(+). It participates in protein modification; peptidyl-diphthamide biosynthesis. Its function is as follows. Catalyzes the first step of diphthamide biosynthesis, a post-translational modification of histidine which occurs in elongation factor 2. DPH1 and DPH2 transfer a 3-amino-3-carboxypropyl (ACP) group from S-adenosyl-L-methionine (SAM) to a histidine residue, the reaction is assisted by a reduction system comprising DPH3 and a NADH-dependent reductase. Acts as a tumor suppressor. This chain is 2-(3-amino-3-carboxypropyl)histidine synthase subunit 1, found in Mus musculus (Mouse).